Reading from the N-terminus, the 386-residue chain is Histidine decarboxylase (386 aa).

Residue His-120 participates in substrate binding. Lys-233 is subject to N6-(pyridoxal phosphate)lysine.

It belongs to the group II decarboxylase family. As to quaternary structure, homotetramer. The cofactor is pyridoxal 5'-phosphate.

The catalysed reaction is L-histidine + H(+) = histamine + CO2. This Vibrio campbellii (strain ATCC BAA-1116) protein is Histidine decarboxylase.